We begin with the raw amino-acid sequence, 208 residues long: N-(5'-phosphoribosyl)anthranilate isomerase (208 aa).

It belongs to the TrpF family.

It carries out the reaction N-(5-phospho-beta-D-ribosyl)anthranilate = 1-(2-carboxyphenylamino)-1-deoxy-D-ribulose 5-phosphate. Its pathway is amino-acid biosynthesis; L-tryptophan biosynthesis; L-tryptophan from chorismate: step 3/5. This is N-(5'-phosphoribosyl)anthranilate isomerase from Methanococcus maripaludis (strain C5 / ATCC BAA-1333).